A 265-amino-acid chain; its full sequence is Diphthine synthase (265 aa).

S-adenosyl-L-methionine-binding positions include L10, D87, V90, 115-116, L166, A209, and H234; that span reads SI.

Belongs to the diphthine synthase family. Homodimer.

The enzyme catalyses 2-[(3S)-amino-3-carboxypropyl]-L-histidyl-[translation elongation factor 2] + 3 S-adenosyl-L-methionine = diphthine-[translation elongation factor 2] + 3 S-adenosyl-L-homocysteine + 3 H(+). The protein operates within protein modification; peptidyl-diphthamide biosynthesis. S-adenosyl-L-methionine-dependent methyltransferase that catalyzes the trimethylation of the amino group of the modified target histidine residue in translation elongation factor 2 (EF-2), to form an intermediate called diphthine. The three successive methylation reactions represent the second step of diphthamide biosynthesis. The polypeptide is Diphthine synthase (Pyrococcus horikoshii (strain ATCC 700860 / DSM 12428 / JCM 9974 / NBRC 100139 / OT-3)).